Reading from the N-terminus, the 492-residue chain is KAT8 regulatory NSL complex subunit 2 (492 aa).

Lys-78 participates in a covalent cross-link: Glycyl lysine isopeptide (Lys-Gly) (interchain with G-Cter in SUMO2). The disordered stretch occupies residues 127-182; it reads LGSQTPESSRSEASRILDEDSWSDGEQEPITVDQTWRGDPDSEADSIDSDQEDPLK. Position 131 is a phosphothreonine (Thr-131). Over residues 135–144 the composition is skewed to basic and acidic residues; that stretch reads SRSEASRILD. A phosphoserine mark is found at Ser-147, Ser-149, Ser-168, Ser-172, and Ser-175. Residues 167–178 are compositionally biased toward acidic residues; sequence DSEADSIDSDQE. Residues 308–364 form a required for interaction with other NSL complex members region; that stretch reads DVRCSNQSLPMTRHCLTHICQDTNQVLFKCCQGSEEVPCNKPVPVSLSEDPCCPLHF. A disordered region spans residues 455–492; that stretch reads AGDGCRSQGSRNSEKGSAPLSQSGLATANGKPEPTSIS.

As to quaternary structure, component of the NSL complex at least composed of KAT8/MOF, KANSL1, KANSL2, KANSL3, MCRS1, PHF20, OGT1/OGT, WDR5 and HCFC1.

The protein resides in the nucleus. The protein localises to the mitochondrion. Non-catalytic component of the NSL histone acetyltransferase complex, a multiprotein complex that mediates histone H4 acetylation at 'Lys-5'- and 'Lys-8' (H4K5ac and H4K8ac) at transcription start sites and promotes transcription initiation. Required for NSL complex stability and for transcription of intraciliary transport genes in both ciliated and non-ciliated cells by regulating histone H4 acetylation at 'Lys-5'- and 'Lys-12' (H4K5ac and H4K12ac). This is necessary for cilium assembly in ciliated cells and for organization of the microtubule cytoskeleton in non-ciliated cells. Required within the NSL complex to maintain nuclear architecture stability by promoting KAT8-mediated acetylation of lamin LMNA. The protein is KAT8 regulatory NSL complex subunit 2 (KANSL2) of Pongo abelii (Sumatran orangutan).